A 284-amino-acid polypeptide reads, in one-letter code: Tripartite motif-containing protein 12A (284 aa).

Residues 15-59 form an RING-type zinc finger; it reads CPVCLNLMVKPVSADCGHTFCQGCITLYFESIKCDKKVFICPVCR. The B box-type zinc-finger motif lies at 91 to 132; the sequence is QKVFNCARHGKKLQLFCRKDMMAICWLCERSQEHRGHKTALI. Zn(2+) is bound by residues C96, H99, C118, and H124. Positions 130-234 form a coiled coil; it reads ALIEEVAQEY…QSKLLEDFIS (105 aa).

The protein belongs to the TRIM/RBCC family. Expressed in embryonic CNS, liver, kidney, olfactory epithelium.

The protein resides in the cytoplasm. In Mus musculus (Mouse), this protein is Tripartite motif-containing protein 12A (Trim12a).